The primary structure comprises 433 residues: GTPase Obg (433 aa).

Residues 2-160 enclose the Obg domain; the sequence is PTFVDQTKIE…RVLRLELKLL (159 aa). The OBG-type G domain maps to 161–334; sequence ADVGLVGFPS…LMNDTATLVE (174 aa). Residues 167–174, 192–196, 214–217, 284–287, and 315–317 each bind GTP; these read GFPSVGKS, FTTLT, DLPG, SQMD, and SSV. 2 residues coordinate Mg(2+): Ser174 and Thr194. Positions 355-433 constitute an OCT domain; that stretch reads YKAPQRNEFM…IGKFVFEFVQ (79 aa).

It belongs to the TRAFAC class OBG-HflX-like GTPase superfamily. OBG GTPase family. As to quaternary structure, monomer. Requires Mg(2+) as cofactor.

Its subcellular location is the cytoplasm. Functionally, an essential GTPase which binds GTP, GDP and possibly (p)ppGpp with moderate affinity, with high nucleotide exchange rates and a fairly low GTP hydrolysis rate. Plays a role in control of the cell cycle, stress response, ribosome biogenesis and in those bacteria that undergo differentiation, in morphogenesis control. The protein is GTPase Obg of Lactobacillus acidophilus (strain ATCC 700396 / NCK56 / N2 / NCFM).